A 649-amino-acid polypeptide reads, in one-letter code: Quinol oxidase subunit 1 (649 aa).

Residues 1–13 (MKFKWDEFFVTGD) lie on the Extracellular side of the membrane. Residues 14–34 (PLILGAQVSIALSTIAIIFVL) form a helical membrane-spanning segment. The Cytoplasmic segment spans residues 35–55 (TYFKKWKWLWSEWITTVDHKK). The chain crosses the membrane as a helical span at residues 56-76 (LGIMYIISAVIMLFRGGVDGL). At 77–104 (MMRAQLALPNNSFLDSNHYNEIFTTHGT) the chain is on the extracellular side. A Fe(II)-heme a-binding site is contributed by His-102. Residues 105–125 (IMIIFMAMPFLIGLINVVVPL) form a helical membrane-spanning segment. Residues 126–139 (QIGARDVAFPYLNN) are Cytoplasmic-facing. The helical transmembrane segment at 140–160 (LSFWTFFVGAMLFNISFVIGG) threads the bilayer. Residues 161–187 (SPNAGWTSYMPLASNDMSPGPGENYYL) are Extracellular-facing. Residues 188 to 208 (LGLQIAGIGTLMTGINFMVTI) traverse the membrane as a helical segment. Residues 209–228 (LKMRTKGMTLMRMPMFTWTT) lie on the Cytoplasmic side of the membrane. The chain crosses the membrane as a helical span at residues 229–249 (LITMVIIVFAFPVLTVALALL). Topologically, residues 250–273 (SFDRLFGAHFFTLEAGGMPMLWAN) are extracellular. A helical membrane pass occupies residues 274 to 294 (LFWIWGHPEVYIVILPAFGIF). Cu cation-binding residues include His-280 and Tyr-284. Positions 280-284 (HPEVY) form a cross-link, 1'-histidyl-3'-tyrosine (His-Tyr). Over 295-305 (SEIISSFARKQ) the chain is Cytoplasmic. A helical transmembrane segment spans residues 306 to 326 (LFGYTAMVGSIIAISVLSFLV). Topologically, residues 327-342 (WTHHFFTMGNSASVNS) are extracellular. Cu cation contacts are provided by His-329 and His-330. The chain crosses the membrane as a helical span at residues 343–363 (FFSITTMAISIPTGVKIFNWL). Topologically, residues 364–376 (FTMYKGRISFTTP) are cytoplasmic. The helical transmembrane segment at 377 to 397 (MLWALAFIPNFVIGGVTGVML) threads the bilayer. Residues 398 to 415 (AMAAADYQYHNTYFLVSH) are Extracellular-facing. Heme a3 is bound at residue His-415. The helical transmembrane segment at 416–436 (FHYVLIAGTVFACFAGFIFWY) threads the bilayer. His-417 is a Fe(II)-heme a binding site. Residues 437–451 (PKMFGHKLNERIGKW) are Cytoplasmic-facing. A helical membrane pass occupies residues 452-472 (FFWIFMIGFNICFFPQYFLGL). Residues 473–492 (QGMPRRIYTYGPNDGWTTLN) are Extracellular-facing. The chain crosses the membrane as a helical span at residues 493-513 (FISTVGAFMMGVGFLILCYNI). Topologically, residues 514–585 (YYSFRYSTRE…KFKKIHMPSN (72 aa)) are cytoplasmic. The chain crosses the membrane as a helical span at residues 586-603 (SGRPFFMSVAFGIAGFGL). Residues 604 to 606 (VFE) are Extracellular-facing. Residues 607–624 (WYWMGVVGLIGVLLCMVL) traverse the membrane as a helical segment. The Cytoplasmic portion of the chain corresponds to 625–649 (RSFEYDNGYYISVDEIKETERKISE).

It belongs to the heme-copper respiratory oxidase family. Cu cation is required as a cofactor. The cofactor is ferriheme a. Requires Heme A3. as cofactor.

The protein resides in the cell membrane. It catalyses the reaction 2 a quinol + O2 = 2 a quinone + 2 H2O. It participates in energy metabolism; oxidative phosphorylation. Functionally, catalyzes quinol oxidation with the concomitant reduction of oxygen to water. Major component for energy conversion during vegetative growth. The sequence is that of Quinol oxidase subunit 1 (qoxB) from Bacillus spizizenii (strain ATCC 23059 / NRRL B-14472 / W23) (Bacillus subtilis subsp. spizizenii).